A 944-amino-acid polypeptide reads, in one-letter code: UvrABC system protein A (944 aa).

Position 33 to 40 (33 to 40 (GLSGSGKS)) interacts with ATP. The C4-type zinc finger occupies 252–279 (CPICGFSIGELEPRMFSFNSPFGACPTC). 2 ABC transporter domains span residues 309–587 (WEPT…KKSL) and 607–935 (ITDR…QYLK). 639 to 646 (GVSGSGKS) lines the ATP pocket. Residues 738–764 (CEACKGDGIIKIEMHFLPDVYVPCEVC) form a C4-type zinc finger.

Belongs to the ABC transporter superfamily. UvrA family. As to quaternary structure, forms a heterotetramer with UvrB during the search for lesions.

The protein resides in the cytoplasm. The UvrABC repair system catalyzes the recognition and processing of DNA lesions. UvrA is an ATPase and a DNA-binding protein. A damage recognition complex composed of 2 UvrA and 2 UvrB subunits scans DNA for abnormalities. When the presence of a lesion has been verified by UvrB, the UvrA molecules dissociate. The chain is UvrABC system protein A from Staphylococcus epidermidis (strain ATCC 35984 / DSM 28319 / BCRC 17069 / CCUG 31568 / BM 3577 / RP62A).